The sequence spans 124 residues: Large ribosomal subunit protein bL12 (124 aa).

Belongs to the bacterial ribosomal protein bL12 family. As to quaternary structure, homodimer. Part of the ribosomal stalk of the 50S ribosomal subunit. Forms a multimeric L10(L12)X complex, where L10 forms an elongated spine to which 2 to 4 L12 dimers bind in a sequential fashion. Binds GTP-bound translation factors.

Its function is as follows. Forms part of the ribosomal stalk which helps the ribosome interact with GTP-bound translation factors. Is thus essential for accurate translation. This is Large ribosomal subunit protein bL12 from Cupriavidus taiwanensis (strain DSM 17343 / BCRC 17206 / CCUG 44338 / CIP 107171 / LMG 19424 / R1) (Ralstonia taiwanensis (strain LMG 19424)).